The following is a 55-amino-acid chain: Large ribosomal subunit protein bL33 (55 aa).

Belongs to the bacterial ribosomal protein bL33 family.

The chain is Large ribosomal subunit protein bL33 from Parvibaculum lavamentivorans (strain DS-1 / DSM 13023 / NCIMB 13966).